The sequence spans 100 residues: Small ribosomal subunit protein uS17 (100 aa).

This sequence belongs to the universal ribosomal protein uS17 family. As to quaternary structure, part of the 30S ribosomal subunit.

Functionally, one of the primary rRNA binding proteins, it binds specifically to the 5'-end of 16S ribosomal RNA. This chain is Small ribosomal subunit protein uS17, found in Erythrobacter litoralis (strain HTCC2594).